The sequence spans 162 residues: Epoxidase pydX (162 aa).

An N-terminal signal peptide occupies residues 1 to 26; it reads MSLIALPLRLLRLLPAITSTWVLAFA. 2 consecutive transmembrane segments (helical) span residues 62–82 and 89–109; these read WILI…LFVG and TGAM…MGYM. N-linked (GlcNAc...) asparagine glycans are attached at residues Asn127 and Asn139.

The protein belongs to the epoxidase xenD family.

The protein localises to the membrane. Its pathway is mycotoxin biosynthesis. Epoxidase; part of the gene cluster that mediates the biosynthesis of pyrrocidines, fungal natural products containing a macrocyclic para-cyclophane connected to a decahydrofluorene ring system that show potent antibiotic activities toward Gram-negative bacteria. Within the pathway, pydX functions synergistically with pydB, pydE and pydZ to form the cyclophane. The pathway begins with the PKS-NRPS pydA which, with the help of the trans-enoyl reductase pydC, synthesizes the polyketide-tyrosyl acyl thioester product which can be reductively off-loaded by the terminal reductase (R) domain in pydA. The alpha/beta hydrolase pydG is then required to catalyze the subsequent Knoevenagel condensation that affords the 3-pyrrolin-2-one ring, whereas the four proteins pydB, pydE, pydX and pydZ then function synergistically to form the cyclophane. PydB and the membrane-bound pydX and pydZ are lipid-binding proteins that can sequester and mold the pdyG product into the inverse S-shape. Binding of the medium chain reductase pydE to the complex would trigger the cascade oxidative cyclization. PydY is involved in the Diels-Alder cycloaddition that forms the decahydrofluorene core. Additional non-enzymatic hydroxylation yields pyrrocidine A2 which can be further reduced into pyrrocidine B by an endogenous reductase. The chain is Epoxidase pydX from Acremonium sp.